A 1266-amino-acid polypeptide reads, in one-letter code: SUMO-interacting motif-containing protein 1 (1266 aa).

Positions 1–35 (MEDFIVISDDSGSESSAGTRSGRARRLRRALSRTP) are disordered. A compositionally biased stretch (basic residues) spans 22–31 (GRARRLRRAL). The SUMO interaction motif 1 (SIM); mediates the binding to polysumoylated substrates signature appears at 45–49 (FIDLT). An SUMO interaction motif 2 (SIM); mediates the binding to polysumoylated substrates motif is present at residues 64–68 (VIDLT). Low complexity-rich tracts occupy residues 183-197 (SPFS…SSSN) and 532-553 (SSGG…VPQS). Disordered regions lie at residues 183–206 (SPFS…PCPQ), 532–732 (SSGG…SGDV), 756–812 (NRHS…PGSA), and 1024–1052 (LTPP…PQPN). The segment covering 560 to 571 (SPGSVSQSSGDV) has biased composition (polar residues). Low complexity predominate over residues 764–777 (SAPSSPSCSANPLS). The tract at residues 779 to 1266 (QSEFSSEKRP…NPDTEPASER (488 aa)) is interaction with SLF2. A required for inhibition of CAPN3 protease activity region spans residues 857 to 1266 (SKGQKLEPIP…NPDTEPASER (410 aa)). The segment at 865 to 1200 (IPHRRLRMVT…IDRKDLIIKR (336 aa)) is NSE5-like domain.

Forms a heterodimer with SLF2. Interacts (via SIM domains) with SUMO1 and SUMO2. Interacts with CAPN3 and CTBP1. Interacts with SMC6 and ZNF451.

It localises to the nucleus. It is found in the PML body. Its function is as follows. Inhibits the protease activity of CAPN3. May play a role in SMC5-SMC6 complex recruitment for viral restriction. Forms a complex with SLF2 and this complex is required to recruit SMC5-SMC6 complex to PML nuclear bodies and sites of viral replication. The sequence is that of SUMO-interacting motif-containing protein 1 (Simc1) from Rattus norvegicus (Rat).